Reading from the N-terminus, the 412-residue chain is L-cysteine:1D-myo-inositol 2-amino-2-deoxy-alpha-D-glucopyranoside ligase (412 aa).

Position 45 (C45) interacts with Zn(2+). L-cysteinyl-5'-AMP-binding positions include 45-48 (CGIT), T60, and 83-85 (NIT). A 'HIGH' region motif is present at residues 47–57 (ITPYDAAHLGH). Positions 185–190 (ERGGDP) match the 'ERGGDP' region motif. W225 provides a ligand contact to L-cysteinyl-5'-AMP. C229 lines the Zn(2+) pocket. 247 to 249 (GDD) is an L-cysteinyl-5'-AMP binding site. H254 is a binding site for Zn(2+). Residue V281 coordinates L-cysteinyl-5'-AMP. The 'KMSKS' region signature appears at 287–291 (KMSKS).

It belongs to the class-I aminoacyl-tRNA synthetase family. MshC subfamily. In terms of assembly, monomer. The cofactor is Zn(2+).

It carries out the reaction 1D-myo-inositol 2-amino-2-deoxy-alpha-D-glucopyranoside + L-cysteine + ATP = 1D-myo-inositol 2-(L-cysteinylamino)-2-deoxy-alpha-D-glucopyranoside + AMP + diphosphate + H(+). In terms of biological role, catalyzes the ATP-dependent condensation of GlcN-Ins and L-cysteine to form L-Cys-GlcN-Ins. In Thermobifida fusca (strain YX), this protein is L-cysteine:1D-myo-inositol 2-amino-2-deoxy-alpha-D-glucopyranoside ligase.